A 466-amino-acid polypeptide reads, in one-letter code: Acetylcholine-gated chloride channel subunit acc-1 (466 aa).

Positions methionine 1–alanine 24 are cleaved as a signal peptide. The Extracellular segment spans residues glutamine 25–tyrosine 242. Asparagine 32, asparagine 102, and asparagine 143 each carry an N-linked (GlcNAc...) asparagine glycan. A disulfide bridge connects residues cysteine 158 and cysteine 172. The N-linked (GlcNAc...) asparagine glycan is linked to asparagine 211. The chain crosses the membrane as a helical span at residues valine 243 to leucine 263. The Cytoplasmic segment spans residues glycine 264–threonine 272. A helical membrane pass occupies residues methionine 273–isoleucine 290. Residues arginine 291–valine 304 lie on the Extracellular side of the membrane. A helical membrane pass occupies residues tryptophan 305–phenylalanine 325. The Cytoplasmic segment spans residues methionine 326–aspartate 427. The disordered stretch occupies residues proline 333–lysine 352. The chain crosses the membrane as a helical span at residues phenylalanine 428–phenylalanine 448. The Extracellular segment spans residues tyrosine 449–proline 466.

The protein belongs to the ligand-gated ion channel (TC 1.A.9) family. In terms of assembly, homopentamer (in vitro). Forms heteropentamers composed of acc-1 and acc-4 or acc-1 and acc-3. Both homopentamers and heteropentamers form functional ion channels. In terms of tissue distribution, expressed in a subset of cholinergic motor neurons including cholinergic motor neurons in the ventral cord, the retrovesicular ganglion and in head neurons such as the SMD, RMD motor neurons, the AVA and AVE command interneurons and the SAA neurons. Also expressed in a small number of glutamatergic neurons including the pharyngeal neurons MI and M3, the PLM neurons and a pair of neurons in the lateral ganglion.

The protein localises to the cell membrane. Functionally, acetylcholine-gated chloride channel subunit. Forms functional homopentameric (in vitro) and functional heteropentameric ion channels with acc-3 and acc-4 ion channel subunits. Currents in channels are triggered in response to acetylcholine, but not in response to GABA, glutamate, glycine, histamine or dopamine. This Caenorhabditis elegans protein is Acetylcholine-gated chloride channel subunit acc-1.